The primary structure comprises 1041 residues: Importin-9 (1041 aa).

Alanine 2 is modified (N-acetylalanine). The Importin N-terminal domain maps to 43–119; that stretch reads AEEQIKVLEV…RELLPNGLRE (77 aa). The segment at 936–967 is disordered; that stretch reads QATPAEWNQDDSNDMWEDQEEEEEEEEDGLAG. The segment covering 943–964 has biased composition (acidic residues); it reads NQDDSNDMWEDQEEEEEEEEDG.

Belongs to the importin beta family. As to quaternary structure, interacts with histones H2A, H2B, H3 and H4. The binding is coupled to RanGTP cycles. Interacts with AKIRIN2; promoting association with pre-assembled proteasomes. Associates with pre-assembled proteasomes; interaction is indirect and mediated via interaction with AKIRIN2. Interacts with PPP2R1A and PPP2R1B.

It localises to the cytoplasm. It is found in the nucleus. Functionally, nuclear transport receptor that mediates nuclear import of proteins, such as histones, proteasome and actin. Serves as receptor for nuclear localization signals (NLS) in cargo substrates. Is thought to mediate docking of the importin/substrate complex to the nuclear pore complex (NPC) through binding to nucleoporin and the complex is subsequently translocated through the pore by an energy requiring, Ran-dependent mechanism. At the nucleoplasmic side of the NPC, Ran binds to the importin, the importin/substrate complex dissociates and importin is re-exported from the nucleus to the cytoplasm where GTP hydrolysis releases Ran. The directionality of nuclear import is thought to be conferred by an asymmetric distribution of the GTP- and GDP-bound forms of Ran between the cytoplasm and nucleus. Mediates the import of pre-assembled proteasomes into the nucleus; AKIRIN2 acts as a molecular bridge between IPO9 and the proteasome complex. Mediates the nuclear import of histones H2A, H2B, H4 and H4. In addition to nuclear import, also acts as a chaperone for histones by preventing inappropriate non-nucleosomal interactions. Mediates the nuclear import of actin. This chain is Importin-9, found in Mus musculus (Mouse).